Consider the following 488-residue polypeptide: Beta-xylosidase (488 aa).

Glu163 acts as the Proton donor in catalysis. Residue Glu275 is the Nucleophile of the active site.

This sequence belongs to the glycosyl hydrolase 39 family.

It carries out the reaction Hydrolysis of (1-&gt;4)-beta-D-xylans, to remove successive D-xylose residues from the non-reducing termini.. In terms of biological role, beta-xylosidase is an intracellular xylan-degrading enzyme. This is Beta-xylosidase (xynB) from Caldicellulosiruptor saccharolyticus (Caldocellum saccharolyticum).